The primary structure comprises 152 residues: SsrA-binding protein (152 aa).

Residues 129–140 (KREDMKKKDSQR) show a composition bias toward basic and acidic residues. The interval 129-152 (KREDMKKKDSQRELSQALKSKNRE) is disordered. Residues 141–152 (ELSQALKSKNRE) show a composition bias toward polar residues.

This sequence belongs to the SmpB family.

Its subcellular location is the cytoplasm. In terms of biological role, required for rescue of stalled ribosomes mediated by trans-translation. Binds to transfer-messenger RNA (tmRNA), required for stable association of tmRNA with ribosomes. tmRNA and SmpB together mimic tRNA shape, replacing the anticodon stem-loop with SmpB. tmRNA is encoded by the ssrA gene; the 2 termini fold to resemble tRNA(Ala) and it encodes a 'tag peptide', a short internal open reading frame. During trans-translation Ala-aminoacylated tmRNA acts like a tRNA, entering the A-site of stalled ribosomes, displacing the stalled mRNA. The ribosome then switches to translate the ORF on the tmRNA; the nascent peptide is terminated with the 'tag peptide' encoded by the tmRNA and targeted for degradation. The ribosome is freed to recommence translation, which seems to be the essential function of trans-translation. This is SsrA-binding protein from Pelobacter propionicus (strain DSM 2379 / NBRC 103807 / OttBd1).